The following is a 300-amino-acid chain: Glucose and ribitol dehydrogenase homolog (300 aa).

A compositionally biased stretch (polar residues) spans 1-14 (MASQQFPPQNQETQ). The disordered stretch occupies residues 1–23 (MASQQFPPQNQETQPGKEHAMDP). 44–68 (IVTGGDSGIGRAVCLCFALEGATVA) contacts NAD(+). Ser192 contributes to the substrate binding site. The Proton acceptor role is filled by Tyr205.

The protein belongs to the short-chain dehydrogenases/reductases (SDR) family.

In terms of biological role, may act as a short alcohol-polyol-sugar dehydrogenase possibly related to carbohydrate metabolism and the acquisition of desiccation tolerance. May also be involved in signal transduction. In Oryza sativa subsp. japonica (Rice), this protein is Glucose and ribitol dehydrogenase homolog.